The sequence spans 196 residues: ATP-dependent Clp protease proteolytic subunit (196 aa).

Catalysis depends on Ser-101, which acts as the Nucleophile. His-126 is an active-site residue.

Belongs to the peptidase S14 family. As to quaternary structure, component of the chloroplastic Clp protease core complex.

Its subcellular location is the plastid. The protein localises to the chloroplast stroma. The enzyme catalyses Hydrolysis of proteins to small peptides in the presence of ATP and magnesium. alpha-casein is the usual test substrate. In the absence of ATP, only oligopeptides shorter than five residues are hydrolyzed (such as succinyl-Leu-Tyr-|-NHMec, and Leu-Tyr-Leu-|-Tyr-Trp, in which cleavage of the -Tyr-|-Leu- and -Tyr-|-Trp bonds also occurs).. Cleaves peptides in various proteins in a process that requires ATP hydrolysis. Has a chymotrypsin-like activity. Plays a major role in the degradation of misfolded proteins. This chain is ATP-dependent Clp protease proteolytic subunit, found in Citrus sinensis (Sweet orange).